The following is a 452-amino-acid chain: Phosphoglucosamine mutase (452 aa).

The active-site Phosphoserine intermediate is Ser101. The Mg(2+) site is built by Ser101, Asp241, Asp243, and Asp245. Ser101 is subject to Phosphoserine.

The protein belongs to the phosphohexose mutase family. Requires Mg(2+) as cofactor. Activated by phosphorylation.

It catalyses the reaction alpha-D-glucosamine 1-phosphate = D-glucosamine 6-phosphate. Functionally, catalyzes the conversion of glucosamine-6-phosphate to glucosamine-1-phosphate. The polypeptide is Phosphoglucosamine mutase (Lactococcus lactis subsp. cremoris (strain SK11)).